The following is a 977-amino-acid chain: Short transient receptor potential channel 4 (977 aa).

Residues M1–R324 are Cytoplasmic-facing. ANK repeat units lie at residues L29 to K60, R71 to N93, V96 to H118, and P141 to G165. H172, C176, C178, and C181 together coordinate Zn(2+). Residues L223–R260 adopt a coiled-coil conformation. The segment at residues H325 to I359 is an intramembrane region (discontinuously helical). Residues R360–P362 lie on the Cytoplasmic side of the membrane. Residues F363 to A383 traverse the membrane as a helical segment. At S384–E403 the chain is on the extracellular side. The helical transmembrane segment at W404–I418 threads the bilayer. Residues E417, Q420, N435, and D438 each contribute to the Ca(2+) site. The Cytoplasmic segment spans residues K419–D432. Residues W433–I453 form a helical membrane-spanning segment. Over V454–L475 the chain is Extracellular. Residues V476–A498 form a helical membrane-spanning segment. The Cytoplasmic segment spans residues N499–R511. The helical transmembrane segment at M512–L534 threads the bilayer. Residues N535–T599 are Extracellular-facing. C549 and C554 form a disulfide bridge. A helical transmembrane segment spans residues M600–M620. Residues M615–L977 form an interaction with ITPR1, ITPR2 and ITPR3 region. Topologically, residues N621–L977 are cytoplasmic. The interval I762–K790 is disordered. Over residues S764–A775 the composition is skewed to low complexity. Positions S777 to K788 are enriched in basic and acidic residues. Residues Y959 and Y972 each carry the phosphotyrosine; by FYN modification. A PDZ-binding domain region spans residues T975 to L977.

This sequence belongs to the transient receptor (TC 1.A.4) family. STrpC subfamily. TRPC4 sub-subfamily. As to quaternary structure, homotetramer. Heterotetramer with TRPC1 and/or TRPC5. Forms a heteromeric ion channel with TRPC1, with a 1:3 TRPC1:TRPC4 stoichiometry. Interacts with TRPC4AP. Isoform alpha but not isoform beta interacts with ITPR1, ITPR2 and ITPR3. Interacts with (via PDZ-binding domain) with NHERF1. Interacts with MX1 and RNF24. Interacts (via CIRB domain) with SESTD1 (via spectrin 1 repeat). Interacts with CDH5 and CTNNB1. Interacts with SPTAN1 (via C-terminal spectrin repeats) and SPTBN5 (via C-terminus). Interacts (via protein 4.1-binding domain) with EPB41L2. Interacts with PLSCR1. Phosphorylation modulates TRPC channel function by regulating the level of TRPC4 at the cell surface and by increasing the association with NHERF1. Strongly expressed in placenta. Expressed at lower levels in heart, pancreas, kidney and brain. Expressed in endothelial cells. Isoform alpha was found to be the predominant isoform. Isoform beta was not found in pancreas and brain.

The protein localises to the cell membrane. It catalyses the reaction Ca(2+)(in) = Ca(2+)(out). It carries out the reaction Na(+)(in) = Na(+)(out). The enzyme catalyses Li(+)(in) = Li(+)(out). The catalysed reaction is Cs(+)(in) = Cs(+)(out). May be operated by a phosphatidylinositol second messenger system activated by receptor tyrosine kinases or G-protein coupled receptors. May be activated by intracellular calcium store depletion. Inhibited by xanthine-based inhibitor Pico145. Functionally, forms a receptor-activated non-selective calcium permeant cation channel. Acts as a cell-cell contact-dependent endothelial calcium entry channel. Forms a homomeric ion channel or a heteromeric ion channel with TRPC1; the heteromeric ion channel has reduced calcium permeability compared to the homomeric channel. Also permeable to monovalent ions including sodium, lithium and cesium ions. Forms a receptor-activated non-selective calcium permeant cation channel. This chain is Short transient receptor potential channel 4 (TRPC4), found in Homo sapiens (Human).